Consider the following 320-residue polypeptide: tRNA dimethylallyltransferase (320 aa).

17-24 (GPTAVGKT) serves as a coordination point for ATP. 19 to 24 (TAVGKT) lines the substrate pocket. Positions 42–45 (DSMQ) are interaction with substrate tRNA.

This sequence belongs to the IPP transferase family. In terms of assembly, monomer. Mg(2+) is required as a cofactor.

It catalyses the reaction adenosine(37) in tRNA + dimethylallyl diphosphate = N(6)-dimethylallyladenosine(37) in tRNA + diphosphate. Functionally, catalyzes the transfer of a dimethylallyl group onto the adenine at position 37 in tRNAs that read codons beginning with uridine, leading to the formation of N6-(dimethylallyl)adenosine (i(6)A). The polypeptide is tRNA dimethylallyltransferase (Bacillus thuringiensis (strain Al Hakam)).